Reading from the N-terminus, the 117-residue chain is Large ribosomal subunit protein bL31B (117 aa).

The segment at Lys-75–Lys-117 is disordered. Over residues Ser-100 to Arg-109 the composition is skewed to basic and acidic residues.

It belongs to the bacterial ribosomal protein bL31 family. Type B subfamily. As to quaternary structure, part of the 50S ribosomal subunit.

This chain is Large ribosomal subunit protein bL31B, found in Protochlamydia amoebophila (strain UWE25).